The following is a 294-amino-acid chain: Nucleophosmin (294 aa).

The residue at position 1 (Met-1) is an N-acetylmethionine. Positions 1–117 (MEDSMDMDMS…PVHISGQHLV (117 aa)) are necessary for interaction with APEX1. The segment at 1-186 (MEDSMDMDMS…DDDDFDDEEA (186 aa)) is required for interaction with SENP3. Position 4 is a phosphoserine; by PLK1 and PLK2 (Ser-4). Residue Ser-10 is modified to Phosphoserine. Lys-27 participates in a covalent cross-link: Glycyl lysine isopeptide (Lys-Gly) (interchain with G-Cter in SUMO2). Lys-32 is modified (N6-acetyllysine; alternate). Residue Lys-32 forms a Glycyl lysine isopeptide (Lys-Gly) (interchain with G-Cter in SUMO1); alternate linkage. Lys-32 is covalently cross-linked (Glycyl lysine isopeptide (Lys-Gly) (interchain with G-Cter in SUMO2); alternate). Ser-43 is modified (phosphoserine). Tyr-67 is subject to Phosphotyrosine. Ser-70 is modified (phosphoserine). Thr-75 and Thr-95 each carry phosphothreonine. Positions 120-132 (EEDAESEDEEEED) are enriched in acidic residues. Residues 120–247 (EEDAESEDEE…PKGPSSVEDI (128 aa)) form a disordered region. At Ser-125 the chain carries Phosphoserine; by CDK2. Residues Ser-137 and Ser-139 each carry the phosphoserine modification. Lys-141 is covalently cross-linked (Glycyl lysine isopeptide (Lys-Gly) (interchain with G-Cter in SUMO2)). At Lys-150 the chain carries N6-acetyllysine; alternate. Lys-150 is covalently cross-linked (Glycyl lysine isopeptide (Lys-Gly) (interchain with G-Cter in SUMO2); alternate). The Nuclear localization signal signature appears at 152–157 (PQKKVK). N6-acetyllysine is present on Lys-154. Residues 161–187 (DEDDDDDDEEDDDEDDDDDDFDDEEAE) are compositionally biased toward acidic residues. Positions 187–215 (EEKAPVKKSIRDTPAKNAQKSNQNGKDSK) are interaction with NOP2. Over residues 188-200 (EKAPVKKSIRDTP) the composition is skewed to basic and acidic residues. The Nuclear localization signal signature appears at 191–197 (PVKKSIR). A Phosphothreonine; by CDK1, CDK2 and CDK6 modification is found at Thr-199. A compositionally biased stretch (polar residues) spans 202–222 (KNAQKSNQNGKDSKPSSTPRS). Position 207 is an ADP-ribosylserine (Ser-207). Lys-212 is modified (N6-acetyllysine). A Glycyl lysine isopeptide (Lys-Gly) (interchain with G-Cter in SUMO2) cross-link involves residue Lys-215. Thr-219 is subject to Phosphothreonine; by CDK1. A compositionally biased stretch (basic and acidic residues) spans 223–235 (KGQESFKKQEKTP). A Phosphoserine modification is found at Ser-227. The residue at position 229 (Lys-229) is an N6-acetyllysine. Lys-230 carries the post-translational modification N6-acetyllysine; alternate. Residue Lys-230 forms a Glycyl lysine isopeptide (Lys-Gly) (interchain with G-Cter in SUMO); alternate linkage. Residues Thr-234 and Thr-237 each carry the phosphothreonine; by CDK1 modification. Phosphoserine occurs at positions 242 and 243. The segment at 243-294 (SVEDIKAKMQASIEKGGSLPKVEAKFINYVKNCFRMTDQEAIQDLWQWRKSL) is required for nucleolar localization. Lys-248 participates in a covalent cross-link: Glycyl lysine isopeptide (Lys-Gly) (interchain with G-Cter in SUMO1); alternate. Residues Lys-248 and Lys-250 each participate in a glycyl lysine isopeptide (Lys-Gly) (interchain with G-Cter in SUMO2); alternate cross-link. N6-acetyllysine; alternate is present on Lys-250. Position 254 is a phosphoserine (Ser-254). Lys-257 is subject to N6-acetyllysine; alternate. A Glycyl lysine isopeptide (Lys-Gly) (interchain with G-Cter in SUMO1); alternate cross-link involves residue Lys-257. Residue Lys-257 forms a Glycyl lysine isopeptide (Lys-Gly) (interchain with G-Cter in SUMO2); alternate linkage. Lys-257 carries the N6-acetyllysine modification. Residue Ser-260 is modified to Phosphoserine. Glycyl lysine isopeptide (Lys-Gly) (interchain with G-Cter in SUMO2); alternate cross-links involve residues Lys-263, Lys-267, and Lys-273. Lys-263 is covalently cross-linked (Glycyl lysine isopeptide (Lys-Gly) (interchain with G-Cter in SUMO); alternate). Lys-267 and Lys-273 each carry N6-acetyllysine; alternate. A Glycyl lysine isopeptide (Lys-Gly) (interchain with G-Cter in SUMO1); alternate cross-link involves residue Lys-267. Lys-267 is subject to N6-succinyllysine; alternate. Position 279 is a phosphothreonine (Thr-279). Lys-292 is subject to N6-acetyllysine.

This sequence belongs to the nucleoplasmin family. Decamer formed by two pentameric rings associated in a head-to-head fashion. Disulfide-linked dimers under certain conditions. The SWAP complex consists of NPM1, NCL, PARP1 and SWAP70. Interacts with NSUN2 and SENP3. Interacts with the methylated form of RPS10. Interacts (via N-terminal domain) with APEX1; the interaction is RNA-dependent and decreases in hydrogen peroxide-damaged cells. Interacts with isoform 1 of NEK2. Interacts with ROCK2 and BRCA2. Interacts with RPGR. Interacts with CENPW. Interacts with EIF2AK2/PKR. Interacts with CEBPA (isoform 4). Interacts with DDX31; this interaction prevents interaction between NPM1 and HDM2. Interacts with MYC; competitive with NOP53. Interacts with NOP53; the interaction is direct and competitive with MYC. Interacts with LRRC34. Interacts with RRP1B. Interacts with NPM3. Interacts with ALKBH2. Interacts with TTF1 (via C-terminal region). Interacts with NOP2. Interacts with ARID3C (via REKLES DOMAIN); the interaction mediates ARID3C nuclear shuttling. In terms of assembly, (Microbial infection) Interacts with hepatitis delta virus S-HDAg. As to quaternary structure, (Microbial infection) Interacts with HTLV1 Rex protein (via N-terminal nuclear localization signal). In terms of processing, acetylated at C-terminal lysine residues, thereby increasing affinity to histones. ADP-ribosylated. Post-translationally, phosphorylated at Ser-4 by PLK1 and PLK2. Phosphorylation at Ser-4 by PLK2 in S phase is required for centriole duplication and is sufficient to trigger centriole replication. Phosphorylation at Ser-4 by PLK1 takes place during mitosis. Phosphorylated by CDK2 at Ser-125 and Thr-199. Phosphorylation at Thr-199 may trigger initiation of centrosome duplication. Phosphorylated by CDK1 at Thr-199, Thr-219, Thr-234 and Thr-237 during cell mitosis. When these four sites are phosphorated, RNA-binding activity seem to be abolished. May be phosphorylated at Ser-70 by NEK2. The Thr-199 phosphorylated form has higher affinity for ROCK2. CDK6 triggers Thr-199 phosphorylation when complexed to Kaposi's sarcoma herpesvirus (KSHV) V-cyclin, leading to viral reactivation by reducing viral LANA levels. In terms of processing, sumoylated by ARF. Ubiquitinated. Ubiquitination leads to proteasomal degradation. Deubiquitinated by USP36.

The protein localises to the nucleus. The protein resides in the nucleolus. It is found in the nucleoplasm. It localises to the cytoplasm. Its subcellular location is the cytoskeleton. The protein localises to the microtubule organizing center. The protein resides in the centrosome. Functionally, involved in diverse cellular processes such as ribosome biogenesis, centrosome duplication, protein chaperoning, histone assembly, cell proliferation, and regulation of tumor suppressors p53/TP53 and ARF. Binds ribosome presumably to drive ribosome nuclear export. Associated with nucleolar ribonucleoprotein structures and bind single-stranded nucleic acids. Acts as a chaperonin for the core histones H3, H2B and H4. Stimulates APEX1 endonuclease activity on apurinic/apyrimidinic (AP) double-stranded DNA but inhibits APEX1 endonuclease activity on AP single-stranded RNA. May exert a control of APEX1 endonuclease activity within nucleoli devoted to repair AP on rDNA and the removal of oxidized rRNA molecules. In concert with BRCA2, regulates centrosome duplication. Regulates centriole duplication: phosphorylation by PLK2 is able to trigger centriole replication. Negatively regulates the activation of EIF2AK2/PKR and suppresses apoptosis through inhibition of EIF2AK2/PKR autophosphorylation. Antagonizes the inhibitory effect of ATF5 on cell proliferation and relieves ATF5-induced G2/M blockade. In complex with MYC enhances the transcription of MYC target genes. May act as chaperonin or cotransporter in the nucleolar localization of transcription termination factor TTF1. This is Nucleophosmin from Homo sapiens (Human).